Here is a 574-residue protein sequence, read N- to C-terminus: MALKGRALYDFHSENKEEISIQQDEELVIFSETSLDGWLQGQNSRGETGLFPASYVEIVRPGISTNHVDYSNSPAGSLGTQGSLYSSPSMASPARSGGGSGFLSNPGSFEDDDDDDWDDWDDGCTVVEEPLAGGLGTNGHPPLNLSYPGAYPNQHMAFRPKAPLERQDSLASAKRGSVVGRNLNRFSCFVRSGVEAFILGDVPMMAKIAETYSIEMGPRGPQWKANPHPFACSIEDPTKQTKFKGIKSYISYKLTPTHAGSPVYRRYKHFDWLYNRLLHKFTVISVPHLPEKQATGRFEEDFIEKRKRRLILWMDHMTSHPVLSQYEGFQHFLSCLDDKQWKMGKRRAEKDEMVGASFLLTFQIPTEHQDLQDVEDRVDTFKAFSKKMDDSVLQLSNVAAELVRKHVGGFRKEFQKLGSAFQAISHAFQMDPPFRSDALNNAISHTGRTYETVGEMFAEQPKHDLFQMLDTLSLYQGLLSNFPDIIHLQKGAFAKVKESQRMSDEGRMAQEEADGIRRRCRVVGFALQAEMNHFHQRRELDFKHMMQSYLRQQILFYQRVGQQLEKTLHMYDHL.

The region spanning Met-1 to Pro-61 is the SH3 domain. At Ser-77 the chain carries Phosphoserine. Positions Gly-79–Met-90 are enriched in polar residues. Residues Gly-79–Asp-116 are disordered. At Ser-92 the chain carries Phosphoserine. The PX domain occupies Phe-230–Gln-340. The region spanning Leu-371–Leu-574 is the BAR domain.

The protein belongs to the sorting nexin family. As to quaternary structure, homodimer (via BAR domain). Interacts with ADAM15. Interacts with FASLG. Interacts (via SH3 domain) with DNM1 and DNM2. Interacts with WASL. Interacts with FCHSD1 (via the F-BAR domain). Post-translationally, phosphorylated. As to expression, detected in brain (at protein level).

Its subcellular location is the cytoplasm. It localises to the cytosol. The protein resides in the membrane. It is found in the cytoplasmic vesicle membrane. Plays a role in the reorganization of the cytoskeleton, endocytosis and cellular vesicle trafficking via its interactions with membranes, WASL, DNM1 and DNM2. Acts both during interphase and at the end of mitotic cell divisions. Required for efficient progress through mitosis and cytokinesis. Required for normal formation of the cleavage furrow at the end of mitosis. Modulates endocytosis of cell-surface proteins, such as APP and PRNP; this then modulates the secretion of APP and PRNP peptides. Promotes membrane tubulation (in vitro). May promote the formation of macropinosomes. This Mus musculus (Mouse) protein is Sorting nexin-33 (Snx33).